Reading from the N-terminus, the 177-residue chain is Putative adenylate kinase (177 aa).

Positions 10, 12, 13, 14, and 15 each coordinate ATP. An NMP region spans residues 30–53; that stretch reads DITEAVKKYKLYTEKDEDMDSYVI. The LID stretch occupies residues 103-113; it reads KRGYKPKKVLE. Arg-104 contributes to the ATP binding site.

The protein belongs to the adenylate kinase family. AK6 subfamily. Interacts with uS11. Not a structural component of 40S pre-ribosomes, but transiently interacts with them by binding to uS11.

The catalysed reaction is AMP + ATP = 2 ADP. The enzyme catalyses ATP + H2O = ADP + phosphate + H(+). Broad-specificity nucleoside monophosphate (NMP) kinase that catalyzes the reversible transfer of the terminal phosphate group between nucleoside triphosphates and monophosphates. Also has ATPase activity. Involved in the late maturation steps of the 30S ribosomal particles, specifically 16S rRNA maturation. While NMP activity is not required for ribosome maturation, ATPase activity is. Associates transiently with small ribosomal subunit protein uS11. ATP hydrolysis breaks the interaction with uS11. May temporarily remove uS11 from the ribosome to enable a conformational change of the ribosomal RNA that is needed for the final maturation step of the small ribosomal subunit. In Methanocaldococcus jannaschii (strain ATCC 43067 / DSM 2661 / JAL-1 / JCM 10045 / NBRC 100440) (Methanococcus jannaschii), this protein is Putative adenylate kinase.